A 94-amino-acid chain; its full sequence is Co-chaperonin GroES (94 aa).

This sequence belongs to the GroES chaperonin family. In terms of assembly, heptamer of 7 subunits arranged in a ring. Interacts with the chaperonin GroEL.

It is found in the cytoplasm. Together with the chaperonin GroEL, plays an essential role in assisting protein folding. The GroEL-GroES system forms a nano-cage that allows encapsulation of the non-native substrate proteins and provides a physical environment optimized to promote and accelerate protein folding. GroES binds to the apical surface of the GroEL ring, thereby capping the opening of the GroEL channel. The sequence is that of Co-chaperonin GroES from Ehrlichia chaffeensis.